Reading from the N-terminus, the 370-residue chain is Actin-related protein 2/3 complex subunit 1A-A (370 aa).

WD repeat units follow at residues 6-45 (FLLEPISCHAWNKDLTQIAISPNNHEVHIYKKSGDQWVKG), 50-89 (EHNGHITGIDWAPKSDRIVTCGADRNAYVWSQKDGVWKPT), 140-179 (PIRSTVLSLDWHPNNVLLAAGSCDFKTRVFSAYIKEVDEK), 202-241 (SSGGWVHSVSFSASGNKLAWVSHDSTVSVADASKNMSVSQ), 244-284 (TEFL…TFVS), and 322-365 (LHQN…SYIQ).

It belongs to the WD repeat ARPC1 family. Component of the Arp2/3 complex.

It localises to the cytoplasm. The protein resides in the cytoskeleton. It is found in the nucleus. Functionally, probably functions as a component of the Arp2/3 complex which is involved in regulation of actin polymerization and together with an activating nucleation-promoting factor (NPF) mediates the formation of branched actin networks. In addition to its role in the cytoplasmic cytoskeleton, the Arp2/3 complex also promotes actin polymerization in the nucleus, thereby regulating gene transcription and repair of damaged DNA. In Xenopus laevis (African clawed frog), this protein is Actin-related protein 2/3 complex subunit 1A-A (arpc1a-a).